The primary structure comprises 692 residues: Sodium- and chloride-dependent glycine transporter 1 (692 aa).

The disordered stretch occupies residues 1-34; it reads MIGGDTRAASAHPGMASAQGPVATPSPEQPFPGT. Residues 1–94 are Cytoplasmic-facing; the sequence is MIGGDTRAAS…TRGNWGNQIE (94 aa). Helical transmembrane passes span 95–115, 122–142, and 174–194; these read FVLT…FPYL, GAFM…LFFM, and VSTY…YYFF. The Extracellular segment spans residues 195–271; the sequence is SSMTHVLPWA…LSDDIGNFGE (77 aa). 9 consecutive transmembrane segments (helical) span residues 272–292, 301–321, 346–366, 393–413, 436–456, 492–512, 516–536, 556–576, and 596–616; these read VRLP…LCLI, VVYF…VRGV, VWGD…GGLI, SVYA…HLGV, LLPI…LLGL, VAGF…WLLL, YAAS…IMYI, LFFQ…ILIF, and VAIG…YALF. Residues 617–692 lie on the Cytoplasmic side of the membrane; it reads QLCRTDGDTL…GSSRFQDSRI (76 aa). At threonine 657 the chain carries Phosphothreonine. Phosphoserine is present on residues serine 659 and serine 684. An essential for interaction with EXOC1 region spans residues 681–692; the sequence is SNGSSRFQDSRI.

The protein belongs to the sodium:neurotransmitter symporter (SNF) (TC 2.A.22) family. SLC6A9 subfamily. Interacts with EXOC1; interaction increases the transporter capacity of SLC6A9 probably by promoting its insertion into the cell membrane. Interacts with EXOC3 and EXOC4. Expressed in the brain (at protein level). At 11 dpc, expressed in the ventral part of the ventricular zone. At 15 dpc, also expressed in adjacent mantle tissue and the meninges. Strongly expressed in 12 dpc and 15 dpc liver. As to expression, expressed in the brain.

The protein localises to the cell membrane. The catalysed reaction is glycine(out) + chloride(out) + 2 Na(+)(out) = glycine(in) + chloride(in) + 2 Na(+)(in). Sodium- and chloride-dependent glycine transporter which is essential for regulating glycine concentrations at inhibitory glycinergic synapses. Its function is as follows. Sodium- and chloride-dependent glycine transporter. This Mus musculus (Mouse) protein is Sodium- and chloride-dependent glycine transporter 1 (Slc6a9).